A 448-amino-acid chain; its full sequence is F-box/FBD/LRR-repeat protein At2g04230 (448 aa).

An F-box domain is found at 12–64 (EDRISDLPDALLLQILSSLPTENAIATSVLSKRWRSLWTMLPKLKFDSNFNPV). LRR repeat units follow at residues 72–98 (PTMF…HLSF), 149–176 (ILKL…YLDQ), 177–202 (VHFK…VVHR), 204–225 (SNAD…TIED), 226–251 (LRQE…NING), 271–296 (ISNV…ILHL), and 319–345 (THER…KLTD). The FBD domain maps to 359 to 410 (KWNPPKCAPECLLFHLETFLWIGYEWQRGDEKEVATYILENARRLKKATFST).

The polypeptide is F-box/FBD/LRR-repeat protein At2g04230 (Arabidopsis thaliana (Mouse-ear cress)).